We begin with the raw amino-acid sequence, 158 residues long: Endoribonuclease YbeY (158 aa).

Positions 119, 123, and 129 each coordinate Zn(2+).

The protein belongs to the endoribonuclease YbeY family. Zn(2+) is required as a cofactor.

The protein localises to the cytoplasm. Single strand-specific metallo-endoribonuclease involved in late-stage 70S ribosome quality control and in maturation of the 3' terminus of the 16S rRNA. This Chlamydia caviae (strain ATCC VR-813 / DSM 19441 / 03DC25 / GPIC) (Chlamydophila caviae) protein is Endoribonuclease YbeY.